Consider the following 235-residue polypeptide: Segregation and condensation protein A (235 aa).

Belongs to the ScpA family. As to quaternary structure, component of a cohesin-like complex composed of ScpA, ScpB and the Smc homodimer, in which ScpA and ScpB bind to the head domain of Smc. The presence of the three proteins is required for the association of the complex with DNA.

The protein localises to the cytoplasm. Its function is as follows. Participates in chromosomal partition during cell division. May act via the formation of a condensin-like complex containing Smc and ScpB that pull DNA away from mid-cell into both cell halves. The polypeptide is Segregation and condensation protein A (Streptococcus equi subsp. equi (strain 4047)).